Consider the following 677-residue polypeptide: MAVKVHTTKRGDPHELRNIFLQYASTEVDGEHYMTPEDFVQRYLGLYNDPNSNPKIVQLLAGVADQTKDGLISYQEFLAFESVLCAPDSMFIVAFQLFDKSGNGEVTFENVKEIFGQTIIHHHIPFNWDCEFIRLHFGHNRKKHLNYVEFTQFLQELQLEHARQAFALKDKSKSGMISGLDFSDVMVTIRSHMLTPFVEENLVSAAGGGTSHQVSFSYFNAFNSLLNNMELVRKIYSTLAGTRKDIEVTKEEFAQSAIRYGQVTPLEIDILYQLADLYNASGRLTLADIERIAPLAEGALPYNLAELQRQQSPGLGRPIWLQIAESAYRFTLGSVAGAVGATAVYPIDLVKTRMQNQRGTGSVVGELMYKNSFDCFKKVLRYEGFFGLYRGLIPQLIGVAPEKAIKLTVNDFVRDKFTKRDGSIPLPAEILAGGCAGGSQVIFTNPLEIVKIRLQVAGEITTGPRVSALNVLQDLGLFGLYKGAKACFLRDIPFSAIYFPVYAHCKLLLADENGRVGGINLLTAGALAGVPAASLVTPADVIKTRLQVAARAGQTTYSGVVDCFRKILREEGPSAFWKGTAARVFRSSPQFGVTLVTYELLQRWFYIDFGGLKPSGSEPTPKSRIADLPPANPDHIGGYRLATATFAGIENKFGLYLPKFKSPSVAVAQPKAAAAAQ.

Residue alanine 2 is modified to N-acetylalanine. The segment at 2-294 is regulatory N-terminal domain; sequence AVKVHTTKRG…TLADIERIAP (293 aa). Topologically, residues 2-329 are mitochondrial intermembrane; that stretch reads AVKVHTTKRG…WLQIAESAYR (328 aa). EF-hand domains are found at residues 40–85, 86–121, 122–156, and 157–192; these read VQRY…SVLC, APDS…TIIH, HHIP…FLQE, and LQLE…IRSH. Aspartate 65, threonine 67, aspartate 69, leucine 71, and glutamate 76 together coordinate Ca(2+). The segment at 295 to 310 is linker loop domain; sequence LAEGALPYNLAELQRQ. Residues 320 to 612 are carrier domain; it reads WLQIAESAYR…RWFYIDFGGL (293 aa). Solcar repeat units lie at residues 324–416, 424–508, and 516–604; these read AESA…VRDK, IPLP…CKLL, and VGGI…LQRW. The chain crosses the membrane as a helical span at residues 330 to 347; that stretch reads FTLGSVAGAVGATAVYPI. The Mitochondrial matrix portion of the chain corresponds to 348-390; it reads DLVKTRMQNQRGTGSVVGELMYKNSFDCFKKVLRYEGFFGLYR. Residues 391-410 form a helical membrane-spanning segment; that stretch reads GLIPQLIGVAPEKAIKLTVN. The Mitochondrial intermembrane segment spans residues 411 to 433; it reads DFVRDKFTKRDGSIPLPAEILAG. A helical membrane pass occupies residues 434–447; the sequence is GCAGGSQVIFTNPL. Over 448–482 the chain is Mitochondrial matrix; it reads EIVKIRLQVAGEITTGPRVSALNVLQDLGLFGLYK. The helical transmembrane segment at 483-502 threads the bilayer; the sequence is GAKACFLRDIPFSAIYFPVY. At 503–521 the chain is on the mitochondrial intermembrane side; that stretch reads AHCKLLLADENGRVGGINL. A helical membrane pass occupies residues 522–539; it reads LTAGALAGVPAASLVTPA. Residues 540-578 lie on the Mitochondrial matrix side of the membrane; the sequence is DVIKTRLQVAARAGQTTYSGVVDCFRKILREEGPSAFWK. A helical transmembrane segment spans residues 579 to 598; sequence GTAARVFRSSPQFGVTLVTY. Over 599 to 677 the chain is Mitochondrial intermembrane; sequence ELLQRWFYID…AQPKAAAAAQ (79 aa). The interval 613 to 677 is C-terminal domain; that stretch reads KPSGSEPTPK…AQPKAAAAAQ (65 aa).

The protein belongs to the mitochondrial carrier (TC 2.A.29) family. As to quaternary structure, homodimer (via N-terminus).

Its subcellular location is the mitochondrion inner membrane. It carries out the reaction L-aspartate(in) + L-glutamate(out) + H(+)(out) = L-aspartate(out) + L-glutamate(in) + H(+)(in). The catalysed reaction is 3-sulfino-L-alanine(out) + L-glutamate(in) + H(+)(in) = 3-sulfino-L-alanine(in) + L-glutamate(out) + H(+)(out). The enzyme catalyses 3-sulfino-L-alanine(out) + L-aspartate(in) = 3-sulfino-L-alanine(in) + L-aspartate(out). In terms of biological role, mitochondrial electrogenic aspartate/glutamate antiporter that favors efflux of aspartate and entry of glutamate and proton within the mitochondria as part of the malate-aspartate shuttle. Also mediates the uptake of L-cysteinesulfinate (3-sulfino-L-alanine) by mitochondria in exchange of L-glutamate and proton. Can also exchange L-cysteinesulfinate with aspartate in their anionic form without any proton translocation. Lacks transport activity towards L-glutamine or gamma-aminobutyric acid (GABA). The protein is Electrogenic aspartate/glutamate antiporter SLC25A12, mitochondrial of Mus musculus (Mouse).